The following is a 418-amino-acid chain: Phosphopentomutase (418 aa).

Residues Asp10, Asp297, His302, Asp338, His339, and His350 each coordinate Mn(2+).

This sequence belongs to the phosphopentomutase family. The cofactor is Mn(2+).

It localises to the cytoplasm. It catalyses the reaction 2-deoxy-alpha-D-ribose 1-phosphate = 2-deoxy-D-ribose 5-phosphate. The catalysed reaction is alpha-D-ribose 1-phosphate = D-ribose 5-phosphate. It participates in carbohydrate degradation; 2-deoxy-D-ribose 1-phosphate degradation; D-glyceraldehyde 3-phosphate and acetaldehyde from 2-deoxy-alpha-D-ribose 1-phosphate: step 1/2. Functionally, isomerase that catalyzes the conversion of deoxy-ribose 1-phosphate (dRib-1-P) and ribose 1-phosphate (Rib-1-P) to deoxy-ribose 5-phosphate (dRib-5-P) and ribose 5-phosphate (Rib-5-P), respectively. This Chromohalobacter salexigens (strain ATCC BAA-138 / DSM 3043 / CIP 106854 / NCIMB 13768 / 1H11) protein is Phosphopentomutase.